Consider the following 516-residue polypeptide: Probable cyclic di-GMP phosphodiesterase PdeB (516 aa).

A run of 2 helical transmembrane segments spans residues 6-26 (LVGL…GLSI) and 242-262 (QVFI…MFVL). The EAL domain maps to 268 to 516 (IQSPHHRLQD…DFLRWAEQHL (249 aa)).

The protein resides in the cell inner membrane. The catalysed reaction is 3',3'-c-di-GMP + H2O = 5'-phosphoguanylyl(3'-&gt;5')guanosine + H(+). Functionally, phosphodiesterase (PDE) that catalyzes the hydrolysis of cyclic-di-GMP (c-di-GMP) to 5'-pGpG. This Escherichia coli (strain K12) protein is Probable cyclic di-GMP phosphodiesterase PdeB.